Reading from the N-terminus, the 88-residue chain is Exodeoxyribonuclease 7 small subunit (88 aa).

It belongs to the XseB family. Heterooligomer composed of large and small subunits.

It localises to the cytoplasm. It catalyses the reaction Exonucleolytic cleavage in either 5'- to 3'- or 3'- to 5'-direction to yield nucleoside 5'-phosphates.. Functionally, bidirectionally degrades single-stranded DNA into large acid-insoluble oligonucleotides, which are then degraded further into small acid-soluble oligonucleotides. The sequence is that of Exodeoxyribonuclease 7 small subunit from Bordetella bronchiseptica (strain ATCC BAA-588 / NCTC 13252 / RB50) (Alcaligenes bronchisepticus).